The chain runs to 1723 residues: Lys-gingipain HG66 (1723 aa).

An N-terminal signal peptide occupies residues 1 to 24 (MRKLLLLIAASLLGVGLYAQNAKI). Positions 25–228 (KLDAPTTRTT…ETAYKQLFNR (204 aa)) are excised as a propeptide. Ca(2+)-binding residues include aspartate 313, aspartate 337, aspartate 339, phenylalanine 341, and glutamate 343. Histidine 444 functions as the Proton donor in the catalytic mechanism. Residue cysteine 477 is the Nucleophile of the active site. Ca(2+)-binding residues include phenylalanine 482 and glutamate 491. The interval 965–985 (DAPNGTPNPNPNPNPGTTTLS) is disordered. Residues serine 987, glutamate 989, aspartate 1000, aspartate 1002, aspartate 1004, histidine 1006, serine 1021, glycine 1023, asparagine 1042, aspartate 1145, and glutamate 1146 each coordinate Ca(2+).

The protein belongs to the peptidase C25 family. In terms of processing, proteolytically cleaved into a catalytic subunit and three adhesins. Arg-gingipain is involved in this post-translational processing.

Its subcellular location is the secreted. The enzyme catalyses Endopeptidase with strict specificity for lysyl bonds.. In terms of biological role, cysteine proteinase with a strong preference for substrates with Lys in the P1 position. Hydrolyzes bovine hemoglobin, bovine serum albumin, casein, human placental type I collagen and human IgA and IgG. Disrupts the functions of polymorphonuclear leukocytes. May act as a virulence factor in the development of peridontal disease. Involved in the coaggregation of P.gingivalis with other oral bacteria. The polypeptide is Lys-gingipain HG66 (Porphyromonas gingivalis (Bacteroides gingivalis)).